Here is a 179-residue protein sequence, read N- to C-terminus: MSRLREKYEKEVVPALMERFGYKNIMQVPKLEKVVINIGVGEAKENPKALEAAMNDLMMISGQKPVITRAKKSISNFKIRKGMPIGVKVTLRRERMYEFLDKLFNIALPRVRDFKGVSPNSFDGRGNYALGVREQLIFPEIDYDKIDKVRGMDIIIVTTAKTDEEAKALLELLGMPFAK.

This sequence belongs to the universal ribosomal protein uL5 family. Part of the 50S ribosomal subunit; part of the 5S rRNA/L5/L18/L25 subcomplex. Contacts the 5S rRNA and the P site tRNA. Forms a bridge to the 30S subunit in the 70S ribosome.

This is one of the proteins that bind and probably mediate the attachment of the 5S RNA into the large ribosomal subunit, where it forms part of the central protuberance. In the 70S ribosome it contacts protein S13 of the 30S subunit (bridge B1b), connecting the 2 subunits; this bridge is implicated in subunit movement. Contacts the P site tRNA; the 5S rRNA and some of its associated proteins might help stabilize positioning of ribosome-bound tRNAs. The polypeptide is Large ribosomal subunit protein uL5 (Caldanaerobacter subterraneus subsp. tengcongensis (strain DSM 15242 / JCM 11007 / NBRC 100824 / MB4) (Thermoanaerobacter tengcongensis)).